A 365-amino-acid polypeptide reads, in one-letter code: MFEINPVKNRIQDLAERSAVLRGYLDYDAKKERLEEVNAELEQPDVWNEPERAQALGKERSSLEAIVDTIDQLAQGLEDVTGLLELAVEEDDEDTFNETSAELDVLENKLGQLEFRRMFSGEYDSADCYLDIQAGSGGTEAQDWASMLVRMYLRWAEAKGFKTEIIEESDGDVAGTKSATIKIIGDYAFGWLRTETGVHRLVRKSPFDSGGRRHTSFSSAFVYPEVDDDIDIEINPADLRIDVYRASGAGGQHVNRTESAVRITHLPTNIVTQCQNDRSQHKNKDQAMKQLKAKLYEFEMQKKNAEKQVMEDNKSDIGWGSQIRSYVLDDSRIKDLRTGVETRNTQAVLDGDLDKFIEASLKAGL.

Position 252 is an N5-methylglutamine (glutamine 252).

Belongs to the prokaryotic/mitochondrial release factor family. Methylated by PrmC. Methylation increases the termination efficiency of RF2.

It localises to the cytoplasm. In terms of biological role, peptide chain release factor 2 directs the termination of translation in response to the peptide chain termination codons UGA and UAA. This Pectobacterium atrosepticum (strain SCRI 1043 / ATCC BAA-672) (Erwinia carotovora subsp. atroseptica) protein is Peptide chain release factor 2.